Reading from the N-terminus, the 314-residue chain is Deoxyribonuclease-1-like 1 (314 aa).

An N-terminal signal peptide occupies residues 1–37; sequence MPFGQPGFLWRVPDAHIAMRGLVMAPLLILLVGGTEA. Asparagine 102 carries N-linked (GlcNAc...) asparagine glycosylation. Glutamate 113 is an active-site residue. Asparagine 133 carries N-linked (GlcNAc...) asparagine glycosylation. Histidine 164 is a catalytic residue. Cysteine 203 and cysteine 240 are oxidised to a cystine. N-linked (GlcNAc...) asparagine glycosylation occurs at asparagine 239.

Belongs to the DNase I family. In terms of tissue distribution, highly expressed in heart and skeletal muscles. Low expression in brain and thymus. Intermediated expression in other tissues.

The protein localises to the endoplasmic reticulum. This is Deoxyribonuclease-1-like 1 (Dnase1l1) from Mus musculus (Mouse).